Consider the following 179-residue polypeptide: Large ribosomal subunit protein bL9 (179 aa).

It belongs to the bacterial ribosomal protein bL9 family.

Its function is as follows. Binds to the 23S rRNA. In Bartonella bacilliformis (strain ATCC 35685 / KC583 / Herrer 020/F12,63), this protein is Large ribosomal subunit protein bL9.